The sequence spans 428 residues: GTPase Obg (428 aa).

An Obg domain is found at 1–158 (MFVDQVKIYV…RDVILELKVL (158 aa)). Positions 159-329 (ADVGLVGFPS…LLFEVANLIE (171 aa)) constitute an OBG-type G domain. GTP-binding positions include 165–172 (GFPSVGKS), 190–194 (FTTIV), 212–215 (DLPG), 282–285 (NKMD), and 310–312 (SAV). Residues Ser-172 and Thr-192 each coordinate Mg(2+). One can recognise an OCT domain in the interval 350-428 (KFDTEGVKFE…ILEYEFEFID (79 aa)).

The protein belongs to the TRAFAC class OBG-HflX-like GTPase superfamily. OBG GTPase family. In terms of assembly, monomer. Requires Mg(2+) as cofactor.

Its subcellular location is the cytoplasm. Functionally, an essential GTPase which binds GTP, GDP and possibly (p)ppGpp with moderate affinity, with high nucleotide exchange rates and a fairly low GTP hydrolysis rate. Plays a role in control of the cell cycle, stress response, ribosome biogenesis and in those bacteria that undergo differentiation, in morphogenesis control. This Bacillus cereus (strain B4264) protein is GTPase Obg.